The sequence spans 180 residues: Probable galaptin lec-8 (180 aa).

Residues Ser11–Ser138 form the Galectin domain.

This chain is Probable galaptin lec-8 (lec-8), found in Caenorhabditis elegans.